A 399-amino-acid polypeptide reads, in one-letter code: MSIRYIDEISDLREKKIFMRVDFNVPLDEHQNITEDTRIRAVLPTINYALDYNAKVVLASHLGRPKGERNAKYSMAPAAKRLSRLLGKEVKLAPDCIGDGVSKIIDSMQPGDVVMLENLRFYPGEEKNDDDFAKALADHCDIYVNDAFAVSHRAHASVEAITKFFPIVAAGFLMKNEMSYFEKSMKNPIRPLVAILGGAKVSGKLEVLENLCNKVDKVIIGGGMAFTFLKALGYNVGKSLVEENLLETALNTYNKAREKGIKFYLPVDCVVADQFNPAAETKVTTIQEIPEGWMALDIGPATVTLFSTALQNAKTIVWNGPMGVFEMDAFSRGTFAMVSAVANSYALTIVGGGDTDVAVHRAGEYAKISYISTGGGAFLELLEGKKLPGIKVLEDNGHK.

Residues 22–24 (DFN), Arg-38, 61–64 (HLGR), Arg-120, and Arg-153 contribute to the substrate site. ATP-binding positions include Lys-204, Glu-326, and 352 to 355 (GGDT).

It belongs to the phosphoglycerate kinase family. As to quaternary structure, monomer.

It is found in the cytoplasm. It catalyses the reaction (2R)-3-phosphoglycerate + ATP = (2R)-3-phospho-glyceroyl phosphate + ADP. It participates in carbohydrate degradation; glycolysis; pyruvate from D-glyceraldehyde 3-phosphate: step 2/5. The sequence is that of Phosphoglycerate kinase from Geotalea uraniireducens (strain Rf4) (Geobacter uraniireducens).